The primary structure comprises 37 residues: Large ribosomal subunit protein bL36 (37 aa).

The protein belongs to the bacterial ribosomal protein bL36 family.

The protein is Large ribosomal subunit protein bL36 of Borreliella burgdorferi (strain ATCC 35210 / DSM 4680 / CIP 102532 / B31) (Borrelia burgdorferi).